The primary structure comprises 445 residues: Exodeoxyribonuclease 7 large subunit (445 aa).

It belongs to the XseA family. As to quaternary structure, heterooligomer composed of large and small subunits.

It localises to the cytoplasm. The enzyme catalyses Exonucleolytic cleavage in either 5'- to 3'- or 3'- to 5'-direction to yield nucleoside 5'-phosphates.. Bidirectionally degrades single-stranded DNA into large acid-insoluble oligonucleotides, which are then degraded further into small acid-soluble oligonucleotides. The protein is Exodeoxyribonuclease 7 large subunit of Pasteurella multocida (strain Pm70).